The sequence spans 314 residues: Zinc transporter ZIP3 (314 aa).

Residues M1–K3 lie on the Extracellular side of the membrane. The chain crosses the membrane as a helical span at residues L4–L24. The Cytoplasmic portion of the chain corresponds to L25 to K42. The helical transmembrane segment at I43–L63 threads the bilayer. At L64–P85 the chain is on the extracellular side. A helical membrane pass occupies residues L86–L106. At T107–R169 the chain is on the cytoplasmic side. S125 and S129 each carry phosphoserine. Residues L170–L190 traverse the membrane as a helical segment. Residues Q191 to K196 lie on the Extracellular side of the membrane. A helical transmembrane segment spans residues V197–I217. Residues S218–A229 are Cytoplasmic-facing. A helical transmembrane segment spans residues A230–I250. Topologically, residues E251–S262 are extracellular. A helical membrane pass occupies residues V263–A283. The Cytoplasmic portion of the chain corresponds to K284 to R292. The helical transmembrane segment at L293 to K313 threads the bilayer. Residue W314 is a topological domain, extracellular.

It belongs to the ZIP transporter (TC 2.A.5) family.

The protein localises to the cell membrane. It is found in the apical cell membrane. It carries out the reaction Zn(2+)(in) = Zn(2+)(out). In terms of biological role, transporter for the divalent cation Zn(2+). Mediates the influx of Zn(2+) into cells from extracellular space. Controls Zn(2+) accumulation into dentate gyrus granule cells in the hippocampus. Mediates Zn(2+) reuptake from the secreted milk within the alveolar lumen. The polypeptide is Zinc transporter ZIP3 (Homo sapiens (Human)).